Reading from the N-terminus, the 896-residue chain is DNA double-strand break repair Rad50 ATPase (896 aa).

ATP is bound by residues 32-38 (NGAGKSS) and Gln137. Coiled-coil stretches lie at residues 200–274 (RRYQ…KLQE), 412–505 (EEIR…LISM), 580–611 (IGDIEALRKQKDEVSKKLKDAEDRTHEIESEF), 636–669 (IKLAEDLKRQRETLREKVKDLRSRSAGMDEIQKR), and 702–731 (RSKVETLRSHVSEIEQRISDRERDIERMKK). The Zinc-hook domain occupies 411–507 (YEEIRRDIDE…KKRQLISMES (97 aa)). Residues Cys455 and Cys458 each coordinate Zn(2+).

Belongs to the SMC family. RAD50 subfamily. As to quaternary structure, homodimer. Forms a heterotetramer composed of two Mre11 subunits and two Rad50 subunits. Zn(2+) serves as cofactor.

Functionally, part of the Rad50/Mre11 complex, which is involved in the early steps of DNA double-strand break (DSB) repair. The complex may facilitate opening of the processed DNA ends to aid in the recruitment of HerA and NurA. Rad50 controls the balance between DNA end bridging and DNA resection via ATP-dependent structural rearrangements of the Rad50/Mre11 complex. In Thermoplasma acidophilum (strain ATCC 25905 / DSM 1728 / JCM 9062 / NBRC 15155 / AMRC-C165), this protein is DNA double-strand break repair Rad50 ATPase.